The following is a 555-amino-acid chain: Urocanate hydratase (555 aa).

NAD(+) contacts are provided by residues 52 to 53, Q130, 176 to 178, E196, R201, 242 to 243, 263 to 267, 272 to 273, and Y321; these read GG, GMG, NA, QTSAH, and YL. C409 is a catalytic residue. NAD(+) is bound at residue G491.

The protein belongs to the urocanase family. Requires NAD(+) as cofactor.

The protein localises to the cytoplasm. The catalysed reaction is 4-imidazolone-5-propanoate = trans-urocanate + H2O. Its pathway is amino-acid degradation; L-histidine degradation into L-glutamate; N-formimidoyl-L-glutamate from L-histidine: step 2/3. Functionally, catalyzes the conversion of urocanate to 4-imidazolone-5-propionate. In Nocardioides sp. (strain ATCC BAA-499 / JS614), this protein is Urocanate hydratase.